Consider the following 229-residue polypeptide: Cytidylate kinase (229 aa).

An ATP-binding site is contributed by Gly10 to Thr18.

Belongs to the cytidylate kinase family. Type 1 subfamily.

It is found in the cytoplasm. It catalyses the reaction CMP + ATP = CDP + ADP. It carries out the reaction dCMP + ATP = dCDP + ADP. In Phocaeicola vulgatus (strain ATCC 8482 / DSM 1447 / JCM 5826 / CCUG 4940 / NBRC 14291 / NCTC 11154) (Bacteroides vulgatus), this protein is Cytidylate kinase.